We begin with the raw amino-acid sequence, 229 residues long: Flagellar L-ring protein (229 aa).

A signal peptide spans 1–23 (MSPLTRIALALAASAALVLALTA). Cysteine 24 is lipidated: N-palmitoyl cysteine. Residue cysteine 24 is the site of S-diacylglycerol cysteine attachment.

It belongs to the FlgH family. The basal body constitutes a major portion of the flagellar organelle and consists of four rings (L,P,S, and M) mounted on a central rod.

It localises to the cell outer membrane. It is found in the bacterial flagellum basal body. Assembles around the rod to form the L-ring and probably protects the motor/basal body from shearing forces during rotation. In Anaeromyxobacter dehalogenans (strain 2CP-C), this protein is Flagellar L-ring protein.